Reading from the N-terminus, the 459-residue chain is N-chimaerin (459 aa).

The residue at position 2 (alanine 2) is an N-acetylalanine. The 87-residue stretch at 49-135 (EYHGMISREE…IETKAAEYIA (87 aa)) folds into the SH2 domain. The residue at position 192 (threonine 192) is a Phosphothreonine. The Phorbol-ester/DAG-type zinc finger occupies 205–255 (VHNFKVHTFRGPHWCEYCANFMWGLIAQGVKCADCGLNVHKQCSKMVPNDC). In terms of domain architecture, Rho-GAP spans 268-459 (CDLTTLVKAH…LLIKNEDILF (192 aa)). Threonine 340 bears the Phosphothreonine mark.

In terms of assembly, interacts with EPHA4; effector of EPHA4 in axon guidance linking EPHA4 activation to RAC1 regulation. May also interact with EPHB1 and EPHB2. In terms of processing, phosphorylated. Phosphorylation is EPHA4 kinase activity-dependent.

In terms of biological role, GTPase-activating protein for p21-rac and a phorbol ester receptor. May play an important role in neuronal signal-transduction mechanisms. Involved in the assembly of neuronal locomotor circuits as a direct effector of EPHA4 in axon guidance. This Mus musculus (Mouse) protein is N-chimaerin (Chn1).